The sequence spans 266 residues: MRKNTYAMRYVAGQPAERILPPGSFASIGQALPAGEPLSNEERIRILVWNIFKQQRAEWLSVLKNYGKDAHLVLLQEAQTTPELVQFATANYLAADQVPAFVLPQHPSGVMTLSAAHPVYCCPLREREPILRLAKSALVTVYPLPDTRLLMVVNVHAVNFSLGVDVYSKQLLPIGDQIAHHSGPVIMAGDFNAWSRPRMNALYRFAREMSLRQVRFTDDQRRRAFGRPLDFVFYRGLNVNEASVLVTRASDHNPLLVEFSPGKPEQ.

Belongs to the UPF0294 family.

It localises to the cytoplasm. The chain is UPF0294 protein YafD from Salmonella newport (strain SL254).